A 279-amino-acid polypeptide reads, in one-letter code: Large ribosomal subunit protein uL2 (279 aa).

Positions 222-264 are disordered; it reads GVAMNPVDHPHGGGEGRTSGGRNPVTPAGKPTKGAKTRVNKAT.

This sequence belongs to the universal ribosomal protein uL2 family. As to quaternary structure, part of the 50S ribosomal subunit. Forms a bridge to the 30S subunit in the 70S ribosome.

One of the primary rRNA binding proteins. Required for association of the 30S and 50S subunits to form the 70S ribosome, for tRNA binding and peptide bond formation. It has been suggested to have peptidyltransferase activity; this is somewhat controversial. Makes several contacts with the 16S rRNA in the 70S ribosome. In Caulobacter sp. (strain K31), this protein is Large ribosomal subunit protein uL2.